A 153-amino-acid polypeptide reads, in one-letter code: Ribosomal RNA large subunit methyltransferase H (153 aa).

S-adenosyl-L-methionine contacts are provided by residues L71, G102, and L121–L126.

Belongs to the RNA methyltransferase RlmH family. Homodimer.

The protein localises to the cytoplasm. The catalysed reaction is pseudouridine(1915) in 23S rRNA + S-adenosyl-L-methionine = N(3)-methylpseudouridine(1915) in 23S rRNA + S-adenosyl-L-homocysteine + H(+). Its function is as follows. Specifically methylates the pseudouridine at position 1915 (m3Psi1915) in 23S rRNA. In Anaeromyxobacter sp. (strain Fw109-5), this protein is Ribosomal RNA large subunit methyltransferase H.